We begin with the raw amino-acid sequence, 331 residues long: Glycerol-3-phosphate dehydrogenase [NAD(P)+] (331 aa).

NADPH-binding residues include W14, R34, and K107. Residues K107, G135, and S137 each coordinate sn-glycerol 3-phosphate. Residue A139 coordinates NADPH. Residues K190, D243, S253, R254, and N255 each coordinate sn-glycerol 3-phosphate. Catalysis depends on K190, which acts as the Proton acceptor. R254 provides a ligand contact to NADPH. NADPH-binding residues include V278 and E280.

The protein belongs to the NAD-dependent glycerol-3-phosphate dehydrogenase family.

The protein localises to the cytoplasm. It carries out the reaction sn-glycerol 3-phosphate + NAD(+) = dihydroxyacetone phosphate + NADH + H(+). It catalyses the reaction sn-glycerol 3-phosphate + NADP(+) = dihydroxyacetone phosphate + NADPH + H(+). The protein operates within membrane lipid metabolism; glycerophospholipid metabolism. Its function is as follows. Catalyzes the reduction of the glycolytic intermediate dihydroxyacetone phosphate (DHAP) to sn-glycerol 3-phosphate (G3P), the key precursor for phospholipid synthesis. This is Glycerol-3-phosphate dehydrogenase [NAD(P)+] from Caulobacter vibrioides (strain ATCC 19089 / CIP 103742 / CB 15) (Caulobacter crescentus).